The following is a 478-amino-acid chain: MNVNLMWFRNDLRLSDNSALHFSCRNNASTVLALFIATPKQWERHCLAPKKKMLIYKNIVALKKKITELGIIFYYYESTDYLESTNYIIEFCKIHKVTSIFFNLEYEFYERQRDKIIKKKLKKNNIIINCFHDSVLITPGSIKNSYGKMYKKFSYFKYKCIKQLQLNIPSCFPKPQNKNLHDHYSLDFTIPIFHTYLEKFDANIFPIGEDIVYEKLKFFIKYAFNKYNFDQEIFELNSTSMLSAHLSIGVISPRQCVTLLFKEYPDIIHKLEECKWINELLWREFYQHLLYFYPNIGQNQSLYHWENRIKWDNNLYYLNLWKQGNTGYPIIDAGMRQLKQLGWISNRLRMITASFLVKNLLIDWRKGEEYFMSQLIDGDFASNNGNWQWIASVGTDSMPYFRIFNPMLQSKKFDINAKFIRKYIPELSNVSTYNIHNPCDNNKTNKIHSKYPQPIINYYHSKKKTLLVFKHAKCSNKL.

Residues 2–136 (NVNLMWFRND…IINCFHDSVL (135 aa)) enclose the Photolyase/cryptochrome alpha/beta domain. Glutamate 110 contacts (6R)-5,10-methylene-5,6,7,8-tetrahydrofolate. FAD is bound by residues tyrosine 227 and 239–243 (TSMLS). Interaction with DNA regions lie at residues 279-286 (ELLWREFY) and 346-347 (NR). 377–379 (DGD) lines the FAD pocket. Residue glutamine 409 participates in DNA binding.

Belongs to the DNA photolyase class-1 family. Monomer. FAD is required as a cofactor. It depends on (6R)-5,10-methylene-5,6,7,8-tetrahydrofolate as a cofactor.

The enzyme catalyses cyclobutadipyrimidine (in DNA) = 2 pyrimidine residues (in DNA).. In terms of biological role, involved in repair of UV radiation-induced DNA damage. Catalyzes the light-dependent monomerization (300-600 nm) of cyclobutyl pyrimidine dimers (in cis-syn configuration), which are formed between adjacent bases on the same DNA strand upon exposure to ultraviolet radiation. In Buchnera aphidicola subsp. Baizongia pistaciae (strain Bp), this protein is Deoxyribodipyrimidine photo-lyase (phrB).